The sequence spans 170 residues: MLGSSSGCESGWTLYLDQSVSSPSPSCFRDSNGFDSRRRSKDSWDQNYVHQEEEEEEDDLSMISDASSGPRNISEEDSVKKINIVGLKKQCKREKKRRDYEKMNSLLDDTASSPLFNFPHMLQKSVGGNKIEQTFPESTLDYSQGFSATQFQDKTAFQEQCGYLHMETRF.

Positions 10 to 15 (SGWTLY) match the SOFL-A motif. Positions 17–78 (DQSVSSPSPS…GPRNISEEDS (62 aa)) are disordered. A compositionally biased stretch (basic and acidic residues) spans 35-44 (DSRRRSKDSW). The SOFL-B motif lies at 61–70 (SMISDASSGP). The Nuclear localization signal signature appears at 79-86 (VKKINIVG).

The protein belongs to the SOFL plant protein family. As to expression, expressed in seedlings, roots, flowers and siliques. Barely detectable in leaves.

It localises to the cytoplasm. The protein localises to the nucleus. Functionally, involved in cytokinin-mediated development. This is Protein SOB FIVE-LIKE 5 from Arabidopsis thaliana (Mouse-ear cress).